Here is a 405-residue protein sequence, read N- to C-terminus: Cytoplasmic tRNA 2-thiolation protein 2 (405 aa).

Belongs to the CTU2/NCS2 family.

It is found in the cytoplasm. The protein operates within tRNA modification; 5-methoxycarbonylmethyl-2-thiouridine-tRNA biosynthesis. Functionally, plays a central role in 2-thiolation of mcm(5)S(2)U at tRNA wobble positions of tRNA(Lys), tRNA(Glu) and tRNA(Gln). May act by forming a heterodimer with NCS6/CTU1 that ligates sulfur from thiocarboxylated URM1 onto the uridine of tRNAs at wobble position. The sequence is that of Cytoplasmic tRNA 2-thiolation protein 2 from Drosophila simulans (Fruit fly).